Reading from the N-terminus, the 161-residue chain is Troponin C, slow skeletal and cardiac muscles (161 aa).

Met1 is modified (N-acetylmethionine). 4 EF-hand domains span residues 16–51, 52–87, 92–127, and 128–161; these read QKNE…LGQN, PTPE…CMKD, KSEE…TGET, and ITED…KGVE. Ca(2+) contacts are provided by Asp65, Asp67, Ser69, Thr71, and Glu76. Ser98 carries the post-translational modification Phosphoserine. Residues Asp105, Asn107, Asp109, Tyr111, Glu116, Asp141, Asn143, Asp145, Arg147, and Glu152 each contribute to the Ca(2+) site.

Belongs to the troponin C family.

Troponin is the central regulatory protein of striated muscle contraction. Tn consists of three components: Tn-I which is the inhibitor of actomyosin ATPase, Tn-T which contains the binding site for tropomyosin and Tn-C. The binding of calcium to Tn-C abolishes the inhibitory action of Tn on actin filaments. This Mus musculus (Mouse) protein is Troponin C, slow skeletal and cardiac muscles (Tnnc1).